The primary structure comprises 315 residues: Ester hydrolase C11orf54 homolog (315 aa).

His266, His268, and His278 together coordinate Zn(2+).

Monomer. Zn(2+) serves as cofactor.

The protein resides in the nucleus. Its subcellular location is the cytoplasm. Its function is as follows. Exhibits ester hydrolase activity on the substrate p-nitrophenyl acetate, in vitro. Regulates DNA damage and repair by regulating HIF1A degradation via chaperone-mediated autophagy (CMA). This chain is Ester hydrolase C11orf54 homolog, found in Rattus norvegicus (Rat).